A 311-amino-acid polypeptide reads, in one-letter code: RRSASDAELSAGAEGATGSEAAPPGDLGGRTRGGGRGSAAAAATTSTREAEGAERRGDTPARKPDPEAGRMDHHQLGTGRYQVLHNEEDNSESSAVEQPSTSSLAAPTVEAAASAPALDPDSPPPYSSITVEAPTTSDTDVYSEFYPVPPPYSVATSLPTYDEAEKAKAAALAAAAADAPQRNQEEDCTPRDDFSDVEQLRVGNDGIFMLAFFMAFIFNWLGFCLSFCITNTIAGRYGAICGFGLSLIKWILIVRFSDYFTGYFNGQYWLWWIFLVLGLLLFFRGFVNYLKVRNMSESMAAAHRTRYFFLL.

Positions 1–133 (RRSASDAELS…PPYSSITVEA (133 aa)) are disordered. Over 1–206 (RRSASDAELS…VEQLRVGNDG (206 aa)) the chain is Cytoplasmic. A compositionally biased stretch (low complexity) spans 7 to 22 (AELSAGAEGATGSEAA). The segment covering 26 to 37 (DLGGRTRGGGRG) has biased composition (gly residues). Residues 38–47 (SAAAAATTST) show a composition bias toward low complexity. Residues 48-75 (REAEGAERRGDTPARKPDPEAGRMDHHQ) are compositionally biased toward basic and acidic residues. Residues 92–101 (ESSAVEQPST) show a composition bias toward polar residues. Positions 102–120 (SSLAAPTVEAAASAPALDP) are enriched in low complexity. Residues 123–126 (PPPY) are interaction with NEDD4. Residues 123–126 (PPPY) carry the PPxY motif 1 motif. Y126, Y142, Y146, and Y152 each carry phosphotyrosine; by SRC. 2 consecutive short sequence motifs (PPxY motif) follow at residues 149–152 (PPPY) and 159–161 (PTY). The chain crosses the membrane as a helical span at residues 207-227 (IFMLAFFMAFIFNWLGFCLSF). The Extracellular segment spans residues 228-232 (CITNT). Residues 233–253 (IAGRYGAICGFGLSLIKWILI) form a helical membrane-spanning segment. The Cytoplasmic portion of the chain corresponds to 254-262 (VRFSDYFTG). The helical transmembrane segment at 263–283 (YFNGQYWLWWIFLVLGLLLFF) threads the bilayer. Residues 284–311 (RGFVNYLKVRNMSESMAAAHRTRYFFLL) are Extracellular-facing.

In terms of assembly, forms heterodimers with NDFIP1. Interacts with HECT domain-containing E3 ubiquitin-protein ligases, including NEDD4. Interacts with NEDD4L. When phosphorylated at Tyr-142, interacts with SRC and LYN SH2 domain. May thus act as a scaffold that recruits SRC to NDFIP1, enhancing NDFIP1 phosphorylation. Interacts with SLC11A2/DMT1. May interact with phosphorylated EGFR. Interacts with KCNH2. In terms of processing, ubiquitinated by NEDD4 and NEDD4L; which does not affect turnover. Also ubiquitinated by ITCH. Post-translationally, undergoes transient tyrosine-phosphorylation following EGF stimulation, most probably catalyzed by SRC. Phosphorylation on Tyr-126, Tyr-146 and Tyr-152 are dependent on the phosphorylation on Tyr-142. Also phosphorylated by LYN and FYN. Ubiquitously expressed, with highest levels in brain, liver, kidney and testis.

It is found in the endosome membrane. The protein resides in the golgi apparatus membrane. The protein localises to the endosome. Its subcellular location is the multivesicular body membrane. Functionally, activates HECT domain-containing E3 ubiquitin-protein ligases, including ITCH, NEDD4, NEDD4L, SMURF2, WWP1 and WWP2, and consequently modulates the stability of their targets. As a result, may control many cellular processes. Recruits ITCH, NEDD4 and SMURF2 to endosomal membranes. Negatively regulates KCNH2 potassium channel activity by decreasing its cell-surface expression and interfering with channel maturation through recruitment of NEDD4L to the Golgi apparatus and multivesicular body where it mediates KCNH2 degradation. May modulate EGFR signaling. Together with NDFIP1, limits the cytokine signaling and expansion of effector Th2 T-cells by promoting degradation of JAK1, probably by ITCH- and NEDD4L-mediated ubiquitination. This chain is NEDD4 family-interacting protein 2 (Ndfip2), found in Mus musculus (Mouse).